We begin with the raw amino-acid sequence, 517 residues long: Salicyloyl-CoA 5-hydroxylase (517 aa).

It belongs to the aromatic-ring hydroxylase family. KMO subfamily.

The enzyme catalyses 2-hydroxybenzoyl-CoA + NADH + O2 + H(+) = 2,5-dihydroxybenzoyl-CoA + NAD(+) + H2O. Involved in the degradation of salicylate via a pathway involving coenzyme A derivative. Catalyzes the aromatic hydroxylation of salicylyl-CoA to yield gentisyl-CoA. This chain is Salicyloyl-CoA 5-hydroxylase, found in Streptomyces sp.